A 325-amino-acid polypeptide reads, in one-letter code: 5-dehydro-2-deoxygluconokinase (325 aa).

It belongs to the carbohydrate kinase PfkB family.

The enzyme catalyses 5-dehydro-2-deoxy-D-gluconate + ATP = 6-phospho-5-dehydro-2-deoxy-D-gluconate + ADP + H(+). Its pathway is polyol metabolism; myo-inositol degradation into acetyl-CoA; acetyl-CoA from myo-inositol: step 5/7. In terms of biological role, catalyzes the phosphorylation of 5-dehydro-2-deoxy-D-gluconate (2-deoxy-5-keto-D-gluconate or DKG) to 6-phospho-5-dehydro-2-deoxy-D-gluconate (DKGP). This is 5-dehydro-2-deoxygluconokinase from Listeria monocytogenes serotype 4a (strain HCC23).